The chain runs to 294 residues: Non-selective voltage-gated ion channel VDAC2 (294 aa).

A2 carries the N-acetylalanine modification. Positions 23 and 31 each coordinate ATP. K31 carries the post-translational modification N6-acetyllysine; alternate. An N6-succinyllysine; alternate modification is found at K31. K31 participates in a covalent cross-link: Glycyl lysine isopeptide (Lys-Gly) (interchain with G-Cter in ubiquitin); alternate. The next 2 membrane-spanning stretches (beta stranded) occupy residues 37–46 (LVKLDVKTKS) and 50–58 (VEFSTSGSS). K64 is covalently cross-linked (Glycyl lysine isopeptide (Lys-Gly) (interchain with G-Cter in ubiquitin)). Residues 65–75 (VTGTLETKYKW) form a beta stranded membrane-spanning segment. Y78 is subject to Phosphotyrosine. The next 3 beta stranded transmembrane spans lie at 80–87 (LTFTEKWN), 91–100 (TLGTEIAIED), and 106–115 (LKLTFDTTFS). T118 bears the Phosphothreonine mark. Position 120 is an N6-acetyllysine; alternate (K120). K120 participates in a covalent cross-link: Glycyl lysine isopeptide (Lys-Gly) (interchain with G-Cter in ubiquitin); alternate. Residue K121 forms a Glycyl lysine isopeptide (Lys-Gly) (interchain with G-Cter in ubiquitin) linkage. The next 4 beta stranded transmembrane spans lie at 122–131 (SGKIKSSYKR), 134–141 (INLGCDVD), 148–156 (AIHGSAVFG), and 161–169 (LAGYQMTFD). Residue K172 forms a Glycyl lysine isopeptide (Lys-Gly) (interchain with G-Cter in ubiquitin) linkage. 6 consecutive transmembrane segments (beta stranded) span residues 174 to 186 (KLTR…GYRT), 189 to 196 (FQLHTNVN), 200 to 209 (EFGGSIYQKV), 213 to 222 (LDTSVNLAWT), 229 to 238 (RFGIAAKYQL), and 242 to 249 (ASISAKVN). S251 is subject to Phosphoserine. Residues 253 to 255 (LIG) and 271 to 275 (SALVD) each bind NAD(+). The next 2 beta stranded transmembrane spans lie at 253-262 (LIGVGYTQTL) and 265-274 (GVKLTLSALV). At K277 the chain carries N6-acetyllysine; alternate. K277 participates in a covalent cross-link: Glycyl lysine isopeptide (Lys-Gly) (interchain with G-Cter in ubiquitin); alternate. A beta stranded membrane pass occupies residues 284–293 (HKLGLALELE).

This sequence belongs to the eukaryotic mitochondrial porin family. As to quaternary structure, monomer, homodimer and higher order oligomers; formation of higher order structures is necessary for scramblase activity. Interacts with ARMC12 in a TBC1D21-dependent manner. Interacts with KLC3. Interacts with SPATA33. Interacts with PPP3CC in a SPATA33-dependent manner. Post-translationally, ubiquitinated by PRKN during mitophagy, leading to its degradation and enhancement of mitophagy. Deubiquitinated by USP30.

Its subcellular location is the mitochondrion outer membrane. It localises to the membrane. The catalysed reaction is chloride(in) = chloride(out). It catalyses the reaction K(+)(in) = K(+)(out). The enzyme catalyses a 1,2-diacyl-sn-glycero-3-phospho-L-serine(in) = a 1,2-diacyl-sn-glycero-3-phospho-L-serine(out). It carries out the reaction a 1,2-diacyl-sn-glycero-3-phosphocholine(in) = a 1,2-diacyl-sn-glycero-3-phosphocholine(out). The catalysed reaction is a 1,2-diacyl-sn-glycero-3-phospho-(1D-myo-inositol)(in) = a 1,2-diacyl-sn-glycero-3-phospho-(1D-myo-inositol)(out). In terms of biological role, non-selective voltage-gated ion channel that mediates the transport of anions and cations through the mitochondrion outer membrane and plasma membrane. The channel adopts an open conformation at zero mV and a closed conformation at both positive and negative potentials. There are two populations of channels; the main that functions in a lower open-state conductance with lower ion selectivity, that switch, in a voltage-dependent manner, from the open to a low-conducting 'closed' state and the other that has a normal ion selectivity in the typical high conductance, 'open' state. Binds various lipids, including the sphingolipid ceramide, the phospholipid phosphatidylcholine, and the sterols cholesterol and oxysterol. Binding of ceramide promotes the mitochondrial outer membrane permeabilization (MOMP) apoptotic pathway. Its function is as follows. Catalyzes the scrambling of phospholipids across the outer mitochondrial membrane; the mechanism is unrelated to channel activity and is capable of translocating both anionic and zwitterionic phospholipids. The chain is Non-selective voltage-gated ion channel VDAC2 from Bos taurus (Bovine).